A 289-amino-acid chain; its full sequence is Ferri-bacillibactin esterase BesA (289 aa).

Residues serine 163, glutamate 225, and histidine 263 each act as charge relay system in the active site.

Belongs to the esterase D family.

The protein resides in the cytoplasm. Catalyzes the hydrolysis of the trilactone cycle of ferri-bacillibactin (ferri-BB) complex, leading to the formation of bacillibactin monomers and to cytosolic iron release, thus making iron available for metabolic use. Can also hydrolyze bacillibactin (BB), however the catalytic efficiency for ferri-BB hydrolysis is much higher than for BB. This is Ferri-bacillibactin esterase BesA (besA) from Bacillus subtilis (strain 168).